Consider the following 198-residue polypeptide: Dual specificity protein phosphatase 14 (198 aa).

The region spanning 26–167 (GIAQITSSLF…LIDYERQLFG (142 aa)) is the Tyrosine-protein phosphatase domain. The Phosphocysteine intermediate role is filled by Cys-111.

Belongs to the protein-tyrosine phosphatase family. Non-receptor class dual specificity subfamily. As to quaternary structure, interacts with CD28.

The enzyme catalyses O-phospho-L-tyrosyl-[protein] + H2O = L-tyrosyl-[protein] + phosphate. It catalyses the reaction O-phospho-L-seryl-[protein] + H2O = L-seryl-[protein] + phosphate. It carries out the reaction O-phospho-L-threonyl-[protein] + H2O = L-threonyl-[protein] + phosphate. Its function is as follows. Involved in the inactivation of MAP kinases. Dephosphorylates ERK, JNK and p38 MAP-kinases. Plays a negative role in TCR signaling by dephosphorylating MAP3K7 adapter TAB1 leading to its inactivation. This is Dual specificity protein phosphatase 14 (DUSP14) from Homo sapiens (Human).